A 200-amino-acid polypeptide reads, in one-letter code: Protein RISC-INTERACTING CLEARING 3'-5' EXORIBONUCLEASE 1 (200 aa).

Oligomerization stretches follow at residues 35–66 (SKIL…KSEW), 102–127 (KFVT…IVIR), and 166–173 (DSIQSKWD).

The protein belongs to the RICE family. Homohexamer with DnaQ-like exonuclease fold in a ring-shaped structure with a central cavity. Component of AGO1 and AGO10-centered RNA-induced silencing complexes (RISC). Interacts with and acts as a cofactor of AGO1 and AGO10. In terms of tissue distribution, ubiquitously expressed throughout development in germinating seeds, cotyledons, leaves and roots of young seedlings and adult plants, stems and inflorescence.

It localises to the cytoplasm. It carries out the reaction Exonucleolytic cleavage in the 3'- to 5'-direction to yield nucleoside 5'-phosphates.. 3'-to-5' exoribonuclease (RNase) specifically targeting single-stranded RNAs. Triggers miRNA accumulation in RNA-induced silencing complex (RISC), composed of miRNAs and AGO proteins, by degrading uridylated cleavage fragments. Required during plant growth and development. The polypeptide is Protein RISC-INTERACTING CLEARING 3'-5' EXORIBONUCLEASE 1 (Arabidopsis thaliana (Mouse-ear cress)).